Consider the following 510-residue polypeptide: Dolichyl-P-Man:Man5GlcNAc2-PP-dolichol alpha-1,3-mannosyltransferase Alg3 (510 aa).

Residues 1–43 (MAPPKAASHRPAVRRKKSGTLVDSILDKYLNVRFFKYLLLEPA) are Cytoplasmic-facing. A helical transmembrane segment spans residues 44–64 (ALPIVGLFVLLAELVINVVVI). At 65–97 (QRVPYTEIDWVAYMQECEGFLNGTTNYSLLRGD) the chain is on the lumenal side. A helical membrane pass occupies residues 98-118 (TGPLVYPAAFVYIYSALYYVT). At 119–125 (SHGTNVR) the chain is on the cytoplasmic side. Residues 126–146 (LAQYIFAGIYLLQLALVLRLY) traverse the membrane as a helical segment. Over 147–171 (SKSRKVPPYVLVLSAFTSYRIHSIY) the chain is Lumenal. The chain crosses the membrane as a helical span at residues 172–192 (VLRLFNDPVAVLLLYAALNLF). Residues 193-211 (LDRRWTLGSTFFSLAVGVK) are Cytoplasmic-facing. The helical transmembrane segment at 212-232 (MNILLFAPALLLFYLANLGLL) threads the bilayer. Position 233 (Arg-233) is a topological domain, lumenal. The helical transmembrane segment at 234 to 254 (TILQLAVCGVIQLLLGAPFLL) threads the bilayer. Over 255 to 294 (THPVEYLRGSFDLGRIFEHKWTVNYRFLSRDVFENRTFHV) the chain is Cytoplasmic. Residues 295 to 315 (SLLGLHLLLLLAFAKPIWTFF) form a helical membrane-spanning segment. Residues 316 to 403 (QSYVRLRRIE…YGIHFDRCTQ (88 aa)) lie on the Lumenal side of the membrane. Residues 337-358 (LQLKAQKRPKKVEKDKDKDQKK) form a disordered region. The segment covering 348–358 (VEKDKDKDQKK) has biased composition (basic and acidic residues). A helical membrane pass occupies residues 404-424 (LALLPFFLCNLVGVACSRSLH). Residues 425-426 (YQ) are Cytoplasmic-facing. A helical membrane pass occupies residues 427-447 (FYVWYFHSLPYLAWSTPYSLG). At 448–464 (VRCLILGLIEYCWNTYP) the chain is on the lumenal side. The chain crosses the membrane as a helical span at residues 465-485 (STNFSSAALHFTHIILLAGVA). Topologically, residues 486–510 (KQLIQTMRINNAAKREQQEQQKKLQ) are cytoplasmic.

It belongs to the glycosyltransferase ALG3 family.

The protein resides in the endoplasmic reticulum membrane. The enzyme catalyses an alpha-D-Man-(1-&gt;2)-alpha-D-Man-(1-&gt;2)-alpha-D-Man-(1-&gt;3)-[alpha-D-Man-(1-&gt;6)]-beta-D-Man-(1-&gt;4)-beta-D-GlcNAc-(1-&gt;4)-alpha-D-GlcNAc-diphospho-di-trans,poly-cis-dolichol + a di-trans,poly-cis-dolichyl beta-D-mannosyl phosphate = an alpha-D-Man-(1-&gt;2)-alpha-D-Man-(1-&gt;2)-alpha-D-Man-(1-&gt;3)-[alpha-D-Man-(1-&gt;3)-alpha-D-Man-(1-&gt;6)]-beta-D-Man-(1-&gt;4)-beta-D-GlcNAc-(1-&gt;4)-alpha-D-GlcNAc-diphospho-di-trans,poly-cis-dolichol + a di-trans,poly-cis-dolichyl phosphate + H(+). It functions in the pathway protein modification; protein glycosylation. Probable alpha-1,3-mannosyltransferase involved in the N-glycosylation pathway. Involved in glycosylation of the TNF receptor grnd, regulating its ligand affinity. Required for normal epithelial growth and architecture. Suppressor of JNK-dependent intestinal stem cell proliferation. This Drosophila melanogaster (Fruit fly) protein is Dolichyl-P-Man:Man5GlcNAc2-PP-dolichol alpha-1,3-mannosyltransferase Alg3.